A 201-amino-acid polypeptide reads, in one-letter code: Proteasome subunit beta 1 (201 aa).

A propeptide spans 1-10 (MNGSPSAMKG) (removed in mature form; by autocatalysis). Residue Thr-11 is the Nucleophile of the active site.

This sequence belongs to the peptidase T1B family. As to quaternary structure, the 20S proteasome core is composed of 14 alpha and 14 beta subunits that assemble into four stacked heptameric rings, resulting in a barrel-shaped structure. The two inner rings, each composed of seven catalytic beta subunits, are sandwiched by two outer rings, each composed of seven alpha subunits. The catalytic chamber with the active sites is on the inside of the barrel. Has a gated structure, the ends of the cylinder being occluded by the N-termini of the alpha-subunits. Is capped at one or both ends by the proteasome regulatory ATPase, PAN.

The protein resides in the cytoplasm. It carries out the reaction Cleavage of peptide bonds with very broad specificity.. Its activity is regulated as follows. The formation of the proteasomal ATPase PAN-20S proteasome complex, via the docking of the C-termini of PAN into the intersubunit pockets in the alpha-rings, triggers opening of the gate for substrate entry. Interconversion between the open-gate and close-gate conformations leads to a dynamic regulation of the 20S proteasome proteolysis activity. Its function is as follows. Component of the proteasome core, a large protease complex with broad specificity involved in protein degradation. The sequence is that of Proteasome subunit beta 1 from Thermococcus gammatolerans (strain DSM 15229 / JCM 11827 / EJ3).